The chain runs to 613 residues: ATP-dependent RNA helicase DRS1 (613 aa).

Disordered stretches follow at residues 1-20 and 79-104; these read MPDFILTIDSDEEVDVSDSE and GFGMGASKQEEEEEEEEEEVEVPEVK. Acidic residues-rich tracts occupy residues 9-18 and 88-100; these read DSDEEVDVSD and EEEEEEEEEEVEV. The Q motif motif lies at 130-158; it reads TSFQTLQLSRPVLKGIAELKFTKPTPIQS. The 175-residue stretch at 161 to 335 folds into the Helicase ATP-binding domain; that stretch reads IPIALLGKDI…QLSLQKPVRI (175 aa). 174–181 serves as a coordination point for ATP; the sequence is AQTGSGKT. Residues 282 to 285 carry the DEAD box motif; the sequence is DEAD. The Helicase C-terminal domain maps to 364 to 541; that stretch reads LLYQLLKGVS…ELLRAEMELT (178 aa). Positions 504–552 form a coiled coil; the sequence is KQAEETNKLLESKESVIDEVLEEEKEAKELLRAEMELTKASNLIKHEQE. Positions 571 to 613 are disordered; it reads TKHGKKVNSKKRKANEVRKDEGRSYKKTKTDRMKISNKKKSKK. Residues 572–583 show a composition bias toward basic residues; sequence KHGKKVNSKKRK. Over residues 584–604 the composition is skewed to basic and acidic residues; the sequence is ANEVRKDEGRSYKKTKTDRMK.

The protein belongs to the DEAD box helicase family. DDX27/DRS1 subfamily. In terms of assembly, associates with pre-ribosomal particles.

The protein resides in the nucleus. Its subcellular location is the nucleolus. It catalyses the reaction ATP + H2O = ADP + phosphate + H(+). In terms of biological role, ATP-binding RNA helicase involved in ribosome assembly. In Candida albicans (strain SC5314 / ATCC MYA-2876) (Yeast), this protein is ATP-dependent RNA helicase DRS1 (DRS1).